The following is a 769-amino-acid chain: Calcium up-regulated protein B (769 aa).

Residues Met-1–Thr-22 are disordered. Ricin B-type lectin domains follow at residues Lys-25–Phe-145 and Phe-158–Asn-296.

This sequence belongs to the cup family.

Its subcellular location is the cytoplasm. The protein localises to the membrane. May play an important role in stabilizing and/or regulating the cell membrane during Ca(2+) stress or certain stages of development. This Dictyostelium discoideum (Social amoeba) protein is Calcium up-regulated protein B (cupB).